The primary structure comprises 63 residues: Small ribosomal subunit protein bS21 (63 aa).

This sequence belongs to the bacterial ribosomal protein bS21 family.

This is Small ribosomal subunit protein bS21 from Porphyromonas gingivalis (strain ATCC 33277 / DSM 20709 / CIP 103683 / JCM 12257 / NCTC 11834 / 2561).